The following is a 306-amino-acid chain: Mycothiol acetyltransferase (306 aa).

N-acetyltransferase domains follow at residues 17 to 163 (VARV…RPMP) and 166 to 306 (LALS…YRRA). Glu48 contributes to the 1D-myo-inositol 2-(L-cysteinylamino)-2-deoxy-alpha-D-glucopyranoside binding site. Position 89-91 (89-91 (IVV)) interacts with acetyl-CoA. Glu192, Lys232, and Glu239 together coordinate 1D-myo-inositol 2-(L-cysteinylamino)-2-deoxy-alpha-D-glucopyranoside. Acetyl-CoA-binding positions include 243–245 (LGV) and 250–256 (AARGLGS). Tyr277 is a 1D-myo-inositol 2-(L-cysteinylamino)-2-deoxy-alpha-D-glucopyranoside binding site.

Belongs to the acetyltransferase family. MshD subfamily. As to quaternary structure, monomer.

The enzyme catalyses 1D-myo-inositol 2-(L-cysteinylamino)-2-deoxy-alpha-D-glucopyranoside + acetyl-CoA = mycothiol + CoA + H(+). In terms of biological role, catalyzes the transfer of acetyl from acetyl-CoA to desacetylmycothiol (Cys-GlcN-Ins) to form mycothiol. The polypeptide is Mycothiol acetyltransferase (Clavibacter michiganensis subsp. michiganensis (strain NCPPB 382)).